The primary structure comprises 202 residues: Translation initiation factor IF-3 (202 aa).

Residues 178–202 (TPRKTPLLKKESETTEPKKALRSIN) form a disordered region. Residues 185–196 (LKKESETTEPKK) show a composition bias toward basic and acidic residues.

The protein belongs to the IF-3 family. As to quaternary structure, monomer.

The protein localises to the cytoplasm. In terms of biological role, IF-3 binds to the 30S ribosomal subunit and shifts the equilibrium between 70S ribosomes and their 50S and 30S subunits in favor of the free subunits, thus enhancing the availability of 30S subunits on which protein synthesis initiation begins. This chain is Translation initiation factor IF-3, found in Prochlorococcus marinus (strain NATL1A).